A 231-amino-acid polypeptide reads, in one-letter code: Large ribosomal subunit protein uL3 (231 aa).

Q151 is modified (N5-methylglutamine).

Belongs to the universal ribosomal protein uL3 family. Part of the 50S ribosomal subunit. Forms a cluster with proteins L14 and L19. Methylated by PrmB.

Its function is as follows. One of the primary rRNA binding proteins, it binds directly near the 3'-end of the 23S rRNA, where it nucleates assembly of the 50S subunit. The polypeptide is Large ribosomal subunit protein uL3 (Ehrlichia canis (strain Jake)).